Reading from the N-terminus, the 925-residue chain is Colossin-D (925 aa).

Positions 1-26 are cleaved as a signal peptide; sequence MIKVFKDLKFLILITIILLNLKSINC. 11 N-linked (GlcNAc...) asparagine glycosylation sites follow: N47, N95, N142, N166, N283, N334, N344, N378, N401, N511, and N642.

The protein belongs to the serine-aspartate repeat-containing protein (SDr) family.

It is found in the secreted. The protein is Colossin-D (colD) of Dictyostelium discoideum (Social amoeba).